Consider the following 150-residue polypeptide: Ribosomal RNA large subunit methyltransferase H (150 aa).

S-adenosyl-L-methionine is bound by residues Leu71, Gly100, and 118–123 (FSQMTF).

Belongs to the RNA methyltransferase RlmH family. In terms of assembly, homodimer.

It is found in the cytoplasm. The enzyme catalyses pseudouridine(1915) in 23S rRNA + S-adenosyl-L-methionine = N(3)-methylpseudouridine(1915) in 23S rRNA + S-adenosyl-L-homocysteine + H(+). In terms of biological role, specifically methylates the pseudouridine at position 1915 (m3Psi1915) in 23S rRNA. This is Ribosomal RNA large subunit methyltransferase H from Mycoplasmopsis agalactiae (strain NCTC 10123 / CIP 59.7 / PG2) (Mycoplasma agalactiae).